The primary structure comprises 257 residues: MTLKLYSFGPGANSLKPLATLYEKGLEFEQVFVDPSKFEQHSDWFKKINPRGQVPALWHDGKVVTESTVICEYLEDVFPESGNSLRPADPFKRAEMRVWTKWVDEYFCWCVSTIGWAFGIKAIAQKMSDEEFEEHINKNVPIPEQQLKWRRARNGFPQEMLDEEFRKVGVSVARLEETLSKQDYLVDTGYSLADICNFAIANGLQRPGGFFGDYVNQEKTPGLCAWLDRINARPAIKEMFEKSKREDLLKRQNEKVA.

The 82-residue stretch at 1–82 folds into the GST N-terminal domain; sequence MTLKLYSFGP…YLEDVFPESG (82 aa). Residues 89 to 257 enclose the GST C-terminal domain; it reads DPFKRAEMRV…LLKRQNEKVA (169 aa).

The protein belongs to the GST superfamily.

Its function is as follows. Lignin degradation enzyme. This is Protein LigF (ligF) from Sphingobium sp. (strain NBRC 103272 / SYK-6).